Consider the following 156-residue polypeptide: Radiation-inducible immediate-early gene IEX-1 (156 aa).

Residues methionine 1–serine 62 form a disordered region. At methionine 1–proline 82 the chain is on the cytoplasmic side. A Phosphothreonine; by MAPK1 modification is found at threonine 18. Residue serine 31 is modified to Phosphoserine. The segment covering proline 44–serine 55 has biased composition (low complexity). The chain crosses the membrane as a helical; Signal-anchor for type II membrane protein span at residues alanine 83 to leucine 99. Topologically, residues methionine 100–phenylalanine 156 are extracellular. At threonine 123 the chain carries Phosphothreonine; by MAPK1. Serine 126 is subject to Phosphoserine; by MAPK1. An N-linked (GlcNAc...) asparagine glycan is attached at asparagine 133.

The protein belongs to the IER3 family. Interacts with the PPP2R5C-PP2A holoenzyme and ERK kinases; regulates ERK dephosphorylation. Phosphorylated at Thr-18, Thr-123 and Ser-126 by MAPK1/ERK2 and probably MAPK3/ERK1. Upon phosphorylation by MAPK1/ERK2 and MAPK3/ERK1, acquires the ability to inhibit cell death induced by various stimuli. In terms of processing, glycosylated.

Its subcellular location is the membrane. May play a role in the ERK signaling pathway by inhibiting the dephosphorylation of ERK by phosphatase PP2A-PPP2R5C holoenzyme. Also acts as an ERK downstream effector mediating survival. As a member of the NUPR1/RELB/IER3 survival pathway, may provide pancreatic ductal adenocarcinoma with remarkable resistance to cell stress, such as starvation or gemcitabine treatment. The chain is Radiation-inducible immediate-early gene IEX-1 (IER3) from Homo sapiens (Human).